Consider the following 935-residue polypeptide: Formin-I (935 aa).

Residues 35–76 adopt a coiled-coil conformation; the sequence is QQQQQQQQQQINNENENSINNQENKENNNKDNNNNNNKEIKQ. 3 disordered regions span residues 52–78, 380–511, and 561–590; these read SINN…KQSS, LSSA…QLTP, and KEKM…QSLS. Positions 384 to 407 are enriched in low complexity; the sequence is KKQPQQQPQKDVTSSSSSSSNSSS. Over residues 418 to 428 the composition is skewed to polar residues; the sequence is ITTNDSSSSNP. The span at 431-443 shows a compositional bias: basic and acidic residues; sequence DFDKLSLSSDDKV. Polar residues predominate over residues 444–454; the sequence is NNNNVQIENTT. In terms of domain architecture, FH1 spans 444–505; that stretch reads NNNNVQIENT…KPNNSGGGGG (62 aa). Residues 456-482 show a composition bias toward pro residues; it reads SVPPPPPVGAPPPPPPPPPPPPPPPPS. Residues 484–499 are compositionally biased toward polar residues; that stretch reads LKLNRNRISTPKKPNN. One can recognise an FH2 domain in the interval 506–935; sequence GGQLTPLQKK…SLNLSTLNSK (430 aa). Residues 568-583 show a composition bias toward low complexity; sequence NLNNSNNNNNNNSNNN. Coiled coils occupy residues 702–730 and 803–834; these read SLLD…FIKV and QSSL…QQLL.

The protein belongs to the formin homology family. Diaphanous subfamily.

Formins play an important role in the nucleation of actin and the formation of linear actin filaments. This is Formin-I (forI) from Dictyostelium discoideum (Social amoeba).